A 426-amino-acid polypeptide reads, in one-letter code: Lipoyl synthase, mitochondrial (426 aa).

A mitochondrion-targeting transit peptide spans 1 to 29 (MASPAPLQRLQAPLRRSLARAAVLSSRTY). The span at 27–42 (RTYATIPSPSDPGLTQ) shows a compositional bias: polar residues. Residues 27 to 61 (RTYATIPSPSDPGLTQSSPSPAASTTPAKKAPRPS) are disordered. Positions 43–55 (SSPSPAASTTPAK) are enriched in low complexity. Cys-140, Cys-145, Cys-151, Cys-171, Cys-175, Cys-178, and Ser-388 together coordinate [4Fe-4S] cluster. Residues 154–377 (GNDKSAATAT…KQRALDMGFL (224 aa)) form the Radical SAM core domain.

It belongs to the radical SAM superfamily. Lipoyl synthase family. It depends on [4Fe-4S] cluster as a cofactor.

Its subcellular location is the mitochondrion. It catalyses the reaction [[Fe-S] cluster scaffold protein carrying a second [4Fe-4S](2+) cluster] + N(6)-octanoyl-L-lysyl-[protein] + 2 oxidized [2Fe-2S]-[ferredoxin] + 2 S-adenosyl-L-methionine + 4 H(+) = [[Fe-S] cluster scaffold protein] + N(6)-[(R)-dihydrolipoyl]-L-lysyl-[protein] + 4 Fe(3+) + 2 hydrogen sulfide + 2 5'-deoxyadenosine + 2 L-methionine + 2 reduced [2Fe-2S]-[ferredoxin]. The protein operates within protein modification; protein lipoylation via endogenous pathway; protein N(6)-(lipoyl)lysine from octanoyl-[acyl-carrier-protein]: step 2/2. Its function is as follows. Catalyzes the radical-mediated insertion of two sulfur atoms into the C-6 and C-8 positions of the octanoyl moiety bound to the lipoyl domains of lipoate-dependent enzymes, thereby converting the octanoylated domains into lipoylated derivatives. In Podospora anserina (strain S / ATCC MYA-4624 / DSM 980 / FGSC 10383) (Pleurage anserina), this protein is Lipoyl synthase, mitochondrial.